We begin with the raw amino-acid sequence, 185 residues long: ATP-dependent protease subunit HslV (185 aa).

Threonine 12 is a catalytic residue. Alanine 168, cysteine 171, and threonine 174 together coordinate Na(+).

It belongs to the peptidase T1B family. HslV subfamily. In terms of assembly, a double ring-shaped homohexamer of HslV is capped on each side by a ring-shaped HslU homohexamer. The assembly of the HslU/HslV complex is dependent on binding of ATP.

It is found in the cytoplasm. It carries out the reaction ATP-dependent cleavage of peptide bonds with broad specificity.. Allosterically activated by HslU binding. Protease subunit of a proteasome-like degradation complex believed to be a general protein degrading machinery. This is ATP-dependent protease subunit HslV from Cereibacter sphaeroides (strain ATCC 17029 / ATH 2.4.9) (Rhodobacter sphaeroides).